We begin with the raw amino-acid sequence, 489 residues long: Coronin-1B (489 aa).

Ser2 bears the Phosphoserine mark. WD repeat units follow at residues 80–120, 130–170, 174–213, 217–260, and 265–305; these read GHTG…LTSP, GHTK…ELYR, LHPD…LVAE, AHEG…EPMA, and DSSN…PYIH. A disordered region spans residues 414-443; it reads DSRPAMAPGSSRLGAPASTTAAADATPSGS. The span at 427 to 443 shows a compositional bias: low complexity; that stretch reads GAPASTTAAADATPSGS. Positions 449–474 form a coiled coil; the sequence is EAGKLEEVMQELRALRALVKEQGERI.

Belongs to the WD repeat coronin family. In terms of assembly, forms homooligomers, but does not form complexes with the other coronins. Interacts with Arp2/3 complex components, including ACTR2, ARPC1B and ARPC2. Binds actin. In terms of processing, phosphorylation on Ser-2 regulates the interaction with the Arp2/3 complex and cell motility in fibroblasts. Phosphorylation does not seem to affect subcellular location.

The protein localises to the cytoplasm. The protein resides in the cytoskeleton. Its subcellular location is the stress fiber. Its function is as follows. Regulates leading edge dynamics and cell motility in fibroblasts. May be involved in cytokinesis and signal transduction. In Pongo abelii (Sumatran orangutan), this protein is Coronin-1B (CORO1B).